A 468-amino-acid chain; its full sequence is Peroxisome proliferator-activated receptor alpha (468 aa).

A DNA-binding region (nuclear receptor) is located at residues 99 to 173; the sequence is NIECRICGDK…VGMSHNAIRF (75 aa). 2 NR C4-type zinc fingers span residues 102–122 and 139–161; these read CRIC…CEGC and CDRS…FHKC. In terms of domain architecture, NR LBD spans 239 to 466; it reads FVIHDMETLC…HPLLQEIYRD (228 aa). Ser-280, Tyr-314, and Tyr-464 together coordinate indeglitazar. Residues 304 to 433 form a required for heterodimerization with RXRA region; it reads DQVTLLKYGV…PKLLQKMADL (130 aa).

Belongs to the nuclear hormone receptor family. NR1 subfamily. As to quaternary structure, heterodimer; with RXRA. This heterodimerization is required for DNA binding and transactivation activity. Interacts with NCOA3 coactivator. Interacts with CITED2; the interaction stimulates its transcriptional activity. Also interacts with PPARBP in vitro. Interacts with AKAP13, LPIN1, PRDM16 and coactivator NCOA6. Interacts with ASXL1 and ASXL2. Interacts with PER2. Interacts with SIRT1; the interaction seems to be modulated by NAD(+) levels. Interacts with CRY1 and CRY2. In hepatocytes, interacts with PAQR3 and HUWE1; the interactions promote PPARA poylubiquitination and HUWE1-mediated degradation. Ubiquitinated by E3 ubiquitin-protein ligase HUWE1; leading to proteasomal degradation. In terms of processing, phosphorylated. As to expression, skeletal muscle, liver, heart and kidney. Expressed in monocytes.

The protein resides in the nucleus. Ligand-activated transcription factor. Key regulator of lipid metabolism. Activated by the endogenous ligand 1-palmitoyl-2-oleoyl-sn-glycerol-3-phosphocholine (16:0/18:1-GPC). Activated by oleylethanolamide, a naturally occurring lipid that regulates satiety. Receptor for peroxisome proliferators such as hypolipidemic drugs and fatty acids. Regulates the peroxisomal beta-oxidation pathway of fatty acids. Functions as a transcription activator for the ACOX1 and P450 genes. Transactivation activity requires heterodimerization with RXRA and is antagonized by NR2C2. May be required for the propagation of clock information to metabolic pathways regulated by PER2. The polypeptide is Peroxisome proliferator-activated receptor alpha (PPARA) (Homo sapiens (Human)).